Here is a 345-residue protein sequence, read N- to C-terminus: MENTLGLEIIEVVEQAAIASAKWMGKGEKNTADQVAVEAMRERMNKIYMRGRIVIGEGERDDAPMLYIGEEVGICTQPNADQLCNPDELVEIDIAVDPCEGTNLVAYGQPGSMAVLAISEKGGLFAAPDFYMKKLAAPPAAKGKVDINKSATENLKILSECLDRSIDELVVVVMKRDRHQGLIKEIRDAGARVQLISDGDVGAAISCGFAGTNVHALMGIGAAPEGVISAAAMRALGGHFQGQLIYDPEVVKTGLIGESKQANLDRLSSMGINDPDKVYDAHELASGENVLFAGCGITSGNLMQGVRFFHGGARTQSLVISSQSQTARFVDTIHMAGQPKTVQLH.

Mn(2+) is bound by residues aspartate 33, glutamate 57, aspartate 97, and glutamate 100. Substrate is bound by residues glutamate 100–threonine 102, tyrosine 131, arginine 176–arginine 178, and aspartate 198–aspartate 200. Glutamate 225 lines the Mn(2+) pocket.

Belongs to the FBPase class 2 family. As to quaternary structure, homotetramer. Requires Mn(2+) as cofactor.

The catalysed reaction is beta-D-fructose 1,6-bisphosphate + H2O = beta-D-fructose 6-phosphate + phosphate. It catalyses the reaction D-sedoheptulose 1,7-bisphosphate + H2O = D-sedoheptulose 7-phosphate + phosphate. Its pathway is carbohydrate biosynthesis; Calvin cycle. In terms of biological role, catalyzes the hydrolysis of fructose 1,6-bisphosphate (Fru 1,6-P2) and sedoheptulose 1,7-bisphosphate (Sed 1,7-P2) to fructose 6-phosphate and sedoheptulose 7-phosphate, respectively. This is D-fructose 1,6-bisphosphatase class 2/sedoheptulose 1,7-bisphosphatase from Nostoc sp. (strain PCC 7120 / SAG 25.82 / UTEX 2576).